The chain runs to 147 residues: MSCRKPANYRYGEHTADVLVQAFGCTLEEAFKNAAVALADLTYYSERVEPRMAKKVEVEYDDLEGLLFKWIDELLFLFDAEKFAWGRNIEVELRQGVGYRISATLHGEMYDINKHGFTGLIVKAMTFHMMEIKKVDDYWVLQYVVDI.

Aspartate 17, aspartate 146, and isoleucine 147 together coordinate Ca(2+).

Belongs to the archease family.

Its function is as follows. Activates the tRNA-splicing ligase complex by facilitating the enzymatic turnover of catalytic subunit RtcB. Acts by promoting the guanylylation of RtcB, a key intermediate step in tRNA ligation. Can also alter the NTP specificity of RtcB such that ATP, dGTP or ITP is used efficiently. This Pyrobaculum calidifontis (strain DSM 21063 / JCM 11548 / VA1) protein is Protein archease.